A 282-amino-acid polypeptide reads, in one-letter code: Undecaprenyl-diphosphatase (282 aa).

The next 7 helical transmembrane spans lie at 45-65 (AFMEMFNVVIQLGAILAVVFI), 86-106 (WQLWAKVVVASLPAVIIGIPL), 114-134 (FHNFVSVAIMLIIYGIAFILI), 151-171 (LPYKTALYIGFFQVLSLFPGT), 196-216 (FFLGIPVMFGASGIKVLKFIL), 224-244 (GQLTLLLVAMIVAFGVSMYVI), and 256-276 (FTVFGKYRIGLGALLLIYWVF).

Belongs to the UppP family.

Its subcellular location is the cell membrane. It catalyses the reaction di-trans,octa-cis-undecaprenyl diphosphate + H2O = di-trans,octa-cis-undecaprenyl phosphate + phosphate + H(+). Its function is as follows. Catalyzes the dephosphorylation of undecaprenyl diphosphate (UPP). Confers resistance to bacitracin. The polypeptide is Undecaprenyl-diphosphatase (Streptococcus gordonii (strain Challis / ATCC 35105 / BCRC 15272 / CH1 / DL1 / V288)).